We begin with the raw amino-acid sequence, 401 residues long: Anhydro-N-acetylmuramic acid kinase (401 aa).

25 to 32 (GTSLDGLD) is an ATP binding site.

The protein belongs to the anhydro-N-acetylmuramic acid kinase family.

It catalyses the reaction 1,6-anhydro-N-acetyl-beta-muramate + ATP + H2O = N-acetyl-D-muramate 6-phosphate + ADP + H(+). It functions in the pathway amino-sugar metabolism; 1,6-anhydro-N-acetylmuramate degradation. It participates in cell wall biogenesis; peptidoglycan recycling. Its function is as follows. Catalyzes the specific phosphorylation of 1,6-anhydro-N-acetylmuramic acid (anhMurNAc) with the simultaneous cleavage of the 1,6-anhydro ring, generating MurNAc-6-P. Is required for the utilization of anhMurNAc either imported from the medium or derived from its own cell wall murein, and thus plays a role in cell wall recycling. The chain is Anhydro-N-acetylmuramic acid kinase from Pseudoalteromonas atlantica (strain T6c / ATCC BAA-1087).